The following is a 581-amino-acid chain: Arginine--tRNA ligase (581 aa).

The short motif at 131–141 (ANPTGPLHVGH) is the 'HIGH' region element.

This sequence belongs to the class-I aminoacyl-tRNA synthetase family. As to quaternary structure, monomer.

The protein localises to the cytoplasm. It carries out the reaction tRNA(Arg) + L-arginine + ATP = L-arginyl-tRNA(Arg) + AMP + diphosphate. The polypeptide is Arginine--tRNA ligase (Nitrosospira multiformis (strain ATCC 25196 / NCIMB 11849 / C 71)).